The sequence spans 303 residues: WD repeat-containing protein 38 (303 aa).

7 WD repeats span residues Q24 to R63, G66 to V105, G108 to L147, G150 to S189, G195 to Q233, G236 to K277, and M279 to R303.

The chain is WD repeat-containing protein 38 (Wdr38) from Mus musculus (Mouse).